The primary structure comprises 530 residues: Phosphoenolpyruvate carboxykinase (ATP) (530 aa).

Residues Arg-60, Tyr-195, and Lys-201 each contribute to the substrate site. ATP contacts are provided by residues Lys-201, His-221, and 237–245 (GLSGTGKTT). Mn(2+) contacts are provided by Lys-201 and His-221. A Mn(2+)-binding site is contributed by Asp-258. ATP-binding positions include Glu-286, Arg-324, 443 to 444 (RI), and Ser-449. Position 324 (Arg-324) interacts with substrate.

This sequence belongs to the phosphoenolpyruvate carboxykinase (ATP) family. The cofactor is Mn(2+).

It localises to the cytoplasm. It catalyses the reaction oxaloacetate + ATP = phosphoenolpyruvate + ADP + CO2. It participates in carbohydrate biosynthesis; gluconeogenesis. Involved in the gluconeogenesis. Catalyzes the conversion of oxaloacetate (OAA) to phosphoenolpyruvate (PEP) through direct phosphoryl transfer between the nucleoside triphosphate and OAA. The sequence is that of Phosphoenolpyruvate carboxykinase (ATP) from Pelobacter propionicus (strain DSM 2379 / NBRC 103807 / OttBd1).